Consider the following 589-residue polypeptide: uncharacterized protein (589 aa).

Residues 242–314 (TALEVRNIPE…RFIKIFWYNP (73 aa)) enclose the RRM domain. 3 disordered regions span residues 322-348 (PKKFASHKSPTTSDSSNVESSEDVDPA), 443-465 (ESPAASNGSHHPYASGLPQRGTN), and 566-589 (TSMETGESNTSDNMNIEVEEGRWR). S330 carries the phosphoserine modification. The segment covering 330-340 (SPTTSDSSNVE) has biased composition (low complexity). At T332 the chain carries Phosphothreonine. Residue S334 is modified to Phosphoserine. Residues 566 to 579 (TSMETGESNTSDNM) are compositionally biased toward polar residues.

It localises to the nucleus. This is an uncharacterized protein from Schizosaccharomyces pombe (strain 972 / ATCC 24843) (Fission yeast).